Consider the following 299-residue polypeptide: Small ribosomal subunit protein uS2 (299 aa).

Residues 259 to 291 are compositionally biased toward low complexity; sequence AAASAAGPTSWEADGADWAASSAPAAAGESWAE. A disordered region spans residues 259-299; that stretch reads AAASAAGPTSWEADGADWAASSAPAAAGESWAETQPAEGKW.

Belongs to the universal ribosomal protein uS2 family. As to quaternary structure, component of the small ribosomal subunit. Mature ribosomes consist of a small (40S) and a large (60S) subunit. The 40S subunit contains about 33 different proteins and 1 molecule of RNA (18S). The 60S subunit contains about 49 different proteins and 3 molecules of RNA (25S, 5.8S and 5S). Interacts with rps21.

It is found in the cytoplasm. Its function is as follows. Required for the assembly and/or stability of the 40S ribosomal subunit. Required for the processing of the 20S rRNA-precursor to mature 18S rRNA in a late step of the maturation of 40S ribosomal subunits. The sequence is that of Small ribosomal subunit protein uS2 (rps0) from Aspergillus flavus (strain ATCC 200026 / FGSC A1120 / IAM 13836 / NRRL 3357 / JCM 12722 / SRRC 167).